The primary structure comprises 549 residues: Oxygen-dependent choline dehydrogenase (549 aa).

Residue 4 to 33 participates in FAD binding; the sequence is DFVIIGSGSAGSALAYRLSEDGKNSVLVIE. Histidine 465 serves as the catalytic Proton acceptor.

Belongs to the GMC oxidoreductase family. FAD is required as a cofactor.

It carries out the reaction choline + A = betaine aldehyde + AH2. The catalysed reaction is betaine aldehyde + NAD(+) + H2O = glycine betaine + NADH + 2 H(+). The protein operates within amine and polyamine biosynthesis; betaine biosynthesis via choline pathway; betaine aldehyde from choline (cytochrome c reductase route): step 1/1. Functionally, involved in the biosynthesis of the osmoprotectant glycine betaine. Catalyzes the oxidation of choline to betaine aldehyde and betaine aldehyde to glycine betaine at the same rate. This Rhizobium etli (strain CIAT 652) protein is Oxygen-dependent choline dehydrogenase.